A 620-amino-acid polypeptide reads, in one-letter code: Probable potassium transport system protein Kup (620 aa).

The next 12 helical transmembrane spans lie at 7-27, 44-64, 98-118, 135-155, 166-186, 201-221, 245-265, 278-298, 335-355, 361-381, 394-414, and 417-437; these read LALA…LYAI, VFGV…LKYL, FFLI…GMIT, PAFH…LFLF, LFGP…LVEI, GIMF…AVFL, WAFL…ALLL, LVPS…TIIA, IYVP…VIGF, LAAA…ILFY, VLNV…GASA, and LFHG…VMMT.

This sequence belongs to the HAK/KUP transporter (TC 2.A.72) family.

The protein resides in the cell inner membrane. The catalysed reaction is K(+)(in) + H(+)(in) = K(+)(out) + H(+)(out). In terms of biological role, transport of potassium into the cell. Likely operates as a K(+):H(+) symporter. The polypeptide is Probable potassium transport system protein Kup (Chlorobium chlorochromatii (strain CaD3)).